The primary structure comprises 84 residues: Large ribosomal subunit protein bL27 (84 aa).

The interval 1 to 24 (MAHKKGGGSSKNGRDSNSQRLGVK) is disordered.

The protein belongs to the bacterial ribosomal protein bL27 family.

The polypeptide is Large ribosomal subunit protein bL27 (Leptospira borgpetersenii serovar Hardjo-bovis (strain JB197)).